The primary structure comprises 219 residues: ER lumen protein-retaining receptor (219 aa).

Residues 1–3 (MLN) lie on the Lumenal side of the membrane. Residues 4–22 (VFRIAGDFSHLASIIILIQ) traverse the membrane as a helical segment. The Cytoplasmic segment spans residues 23–36 (SITTSNSVDGISLK). Residues 37–54 (TQLLYTLVFITRYLNLFT) traverse the membrane as a helical segment. Over 55 to 62 (KWTSLYNF) the chain is Lumenal. The helical transmembrane segment at 63–82 (LMKIVFISSSVYVIVLMRQQ) threads the bilayer. Topologically, residues 83-102 (KFKNPVAYQDMITRDQFKIK) are cytoplasmic. Residues 103 to 116 (FLIVPCILLGLIFN) form a helical membrane-spanning segment. Residues 117–123 (YRFSFIQ) lie on the Lumenal side of the membrane. Residues 124 to 143 (ICWSFSLWLESVAILPQLFM) traverse the membrane as a helical segment. The Cytoplasmic segment spans residues 144 to 155 (LTKTGKAKQLTS). A helical transmembrane segment spans residues 156-174 (HYIFALGLYRALYIPNWIW). Over 175–184 (RYYTEERFDK) the chain is Lumenal. A helical transmembrane segment spans residues 185 to 205 (LSVFTGVIQTLVYSDFFYIYY). The Cytoplasmic portion of the chain corresponds to 206–219 (QKVIKLGGDLELPQ).

The protein belongs to the ERD2 family.

The protein resides in the endoplasmic reticulum membrane. Its function is as follows. Required for the retention of luminal endoplasmic reticulum proteins. Determines the specificity of the luminal ER protein retention system. Also required for normal vesicular traffic through the Golgi. This receptor recognizes H-D-E-L and D-D-E-L, but not K-D-E-L. This is ER lumen protein-retaining receptor (ERD2) from Kluyveromyces lactis (strain ATCC 8585 / CBS 2359 / DSM 70799 / NBRC 1267 / NRRL Y-1140 / WM37) (Yeast).